The chain runs to 751 residues: Catalase-peroxidase (751 aa).

Residues 92 to 240 (WHSAGTYRVT…VAAAHMGLIY (149 aa)) constitute a cross-link (tryptophyl-tyrosyl-methioninium (Trp-Tyr) (with M-266)). The Proton acceptor role is filled by His-93. Residues 240–266 (YVNPEGPDGVPDPIAAARDIRTTFHRM) constitute a cross-link (tryptophyl-tyrosyl-methioninium (Tyr-Met) (with W-92)). His-281 serves as a coordination point for heme b.

Belongs to the peroxidase family. Peroxidase/catalase subfamily. In terms of assembly, homodimer or homotetramer. It depends on heme b as a cofactor. In terms of processing, formation of the three residue Trp-Tyr-Met cross-link is important for the catalase, but not the peroxidase activity of the enzyme.

It is found in the cytoplasm. The catalysed reaction is H2O2 + AH2 = A + 2 H2O. The enzyme catalyses 2 H2O2 = O2 + 2 H2O. In terms of biological role, bifunctional enzyme with both catalase and broad-spectrum peroxidase activity. This chain is Catalase-peroxidase, found in Phaeosphaeria nodorum (strain SN15 / ATCC MYA-4574 / FGSC 10173) (Glume blotch fungus).